The following is a 422-amino-acid chain: Probable protein phosphatase 2C 43 (422 aa).

One can recognise a PPM-type phosphatase domain in the interval 117 to 393 (SSGSYADKGD…DNVTVVVICF (277 aa)). Mn(2+)-binding residues include D163, G164, D341, and D384.

This sequence belongs to the PP2C family. Requires Mg(2+) as cofactor. Mn(2+) serves as cofactor.

It carries out the reaction O-phospho-L-seryl-[protein] + H2O = L-seryl-[protein] + phosphate. The catalysed reaction is O-phospho-L-threonyl-[protein] + H2O = L-threonyl-[protein] + phosphate. The polypeptide is Probable protein phosphatase 2C 43 (Arabidopsis thaliana (Mouse-ear cress)).